The chain runs to 80 residues: MQSLIAAIVALVVVAIIAIVVWSIVFIEYRKILRQRKIDRLIDRIRERAEDSGNESEGDQEELSALVEMGHDAPWDIDDL.

At 1-6 (MQSLIA) the chain is on the extracellular side. The chain crosses the membrane as a helical span at residues 7–27 (AIVALVVVAIIAIVVWSIVFI). Residues 28–80 (EYRKILRQRKIDRLIDRIRERAEDSGNESEGDQEELSALVEMGHDAPWDIDDL) lie on the Cytoplasmic side of the membrane. The disordered stretch occupies residues 49–80 (AEDSGNESEGDQEELSALVEMGHDAPWDIDDL). Residues Ser52 and Ser56 each carry the phosphoserine; by host CK2 modification. The span at 52-62 (SGNESEGDQEE) shows a compositional bias: acidic residues.

Belongs to the HIV-1 VPU protein family. In terms of assembly, homopentamer. Interacts with host CD4 and BRTC; these interactions induce proteasomal degradation of CD4. Interacts with host BST2; this interaction leads to the degradation of host BST2. Interacts with host FBXW11. Interacts with host AP1M1; this interaction plays a role in the mistrafficking and subsequent degradation of host BST2. Interacts with host RANBP2; this interaction allows Vpu to down-regulate host BLM sumoylation. Post-translationally, phosphorylated by host CK2. This phosphorylation is necessary for interaction with human BTRC and degradation of CD4.

The protein resides in the host membrane. Its activity is regulated as follows. Ion channel activity is inhibited by hexamethylene amiloride in vitro. In terms of biological role, enhances virion budding by targeting host CD4 and Tetherin/BST2 to proteasome degradation. Degradation of CD4 prevents any unwanted premature interactions between viral Env and its host receptor CD4 in the endoplasmic reticulum. Degradation of antiretroviral protein Tetherin/BST2 is important for virion budding, as BST2 tethers new viral particles to the host cell membrane. Mechanistically, Vpu bridges either CD4 or BST2 to BTRC, a substrate recognition subunit of the Skp1/Cullin/F-box protein E3 ubiquitin ligase, induces their ubiquitination and subsequent proteasomal degradation. The alteration of the E3 ligase specificity by Vpu seems to promote the degradation of host IKBKB, leading to NF-kappa-B down-regulation and subsequent apoptosis. Acts as a viroporin that forms an oligomeric ion channel in membranes. Modulates the host DNA repair mechanisms to promote degradation of nuclear viral cDNA in cells that are already productively infected in order to suppress immune sensing and proviral hyper-integration (superinfection). Manipulates PML-NBs and modulates SUMOylation of host BLM protein thereby enhancing its DNA-end processing activity toward viral unintegrated linear DNA. Also inhibits RAD52-mediated homologous repair of viral cDNA, preventing the generation of dead-end circular forms of single copies of the long terminal repeat and permitting sustained nucleolytic attack. The polypeptide is Protein Vpu (Human immunodeficiency virus type 1 group M subtype B (isolate JH32) (HIV-1)).